The primary structure comprises 94 residues: Pyrimidine/purine nucleoside phosphorylase (94 aa).

The protein belongs to the nucleoside phosphorylase PpnP family.

It carries out the reaction a purine D-ribonucleoside + phosphate = a purine nucleobase + alpha-D-ribose 1-phosphate. The catalysed reaction is adenosine + phosphate = alpha-D-ribose 1-phosphate + adenine. The enzyme catalyses cytidine + phosphate = cytosine + alpha-D-ribose 1-phosphate. It catalyses the reaction guanosine + phosphate = alpha-D-ribose 1-phosphate + guanine. It carries out the reaction inosine + phosphate = alpha-D-ribose 1-phosphate + hypoxanthine. The catalysed reaction is thymidine + phosphate = 2-deoxy-alpha-D-ribose 1-phosphate + thymine. The enzyme catalyses uridine + phosphate = alpha-D-ribose 1-phosphate + uracil. It catalyses the reaction xanthosine + phosphate = alpha-D-ribose 1-phosphate + xanthine. Catalyzes the phosphorolysis of diverse nucleosides, yielding D-ribose 1-phosphate and the respective free bases. Can use uridine, adenosine, guanosine, cytidine, thymidine, inosine and xanthosine as substrates. Also catalyzes the reverse reactions. The protein is Pyrimidine/purine nucleoside phosphorylase of Pectobacterium carotovorum subsp. carotovorum (strain PC1).